We begin with the raw amino-acid sequence, 88 residues long: Small ribosomal subunit protein bS20 (88 aa).

A disordered region spans residues 1-23; that stretch reads MANSPQAKKRARQNDKARAHNAS.

It belongs to the bacterial ribosomal protein bS20 family.

Binds directly to 16S ribosomal RNA. The protein is Small ribosomal subunit protein bS20 of Saccharophagus degradans (strain 2-40 / ATCC 43961 / DSM 17024).